The following is a 298-amino-acid chain: 4-hydroxy-tetrahydrodipicolinate synthase (298 aa).

Residue Thr51 participates in pyruvate binding. The Proton donor/acceptor role is filled by Tyr140. Lys168 serves as the catalytic Schiff-base intermediate with substrate. Ile210 provides a ligand contact to pyruvate.

The protein belongs to the DapA family. In terms of assembly, homotetramer; dimer of dimers.

The protein resides in the cytoplasm. The catalysed reaction is L-aspartate 4-semialdehyde + pyruvate = (2S,4S)-4-hydroxy-2,3,4,5-tetrahydrodipicolinate + H2O + H(+). The protein operates within amino-acid biosynthesis; L-lysine biosynthesis via DAP pathway; (S)-tetrahydrodipicolinate from L-aspartate: step 3/4. In terms of biological role, catalyzes the condensation of (S)-aspartate-beta-semialdehyde [(S)-ASA] and pyruvate to 4-hydroxy-tetrahydrodipicolinate (HTPA). In Acidovorax sp. (strain JS42), this protein is 4-hydroxy-tetrahydrodipicolinate synthase.